Consider the following 616-residue polypeptide: Dihydroxy-acid dehydratase (616 aa).

D81 contacts Mg(2+). C122 is a binding site for [2Fe-2S] cluster. The Mg(2+) site is built by D123 and K124. K124 is subject to N6-carboxylysine. Residue C195 coordinates [2Fe-2S] cluster. Position 491 (E491) interacts with Mg(2+). The active-site Proton acceptor is the S517.

Belongs to the IlvD/Edd family. Homodimer. Requires [2Fe-2S] cluster as cofactor. Mg(2+) is required as a cofactor.

The enzyme catalyses (2R)-2,3-dihydroxy-3-methylbutanoate = 3-methyl-2-oxobutanoate + H2O. It carries out the reaction (2R,3R)-2,3-dihydroxy-3-methylpentanoate = (S)-3-methyl-2-oxopentanoate + H2O. It participates in amino-acid biosynthesis; L-isoleucine biosynthesis; L-isoleucine from 2-oxobutanoate: step 3/4. The protein operates within amino-acid biosynthesis; L-valine biosynthesis; L-valine from pyruvate: step 3/4. Functions in the biosynthesis of branched-chain amino acids. Catalyzes the dehydration of (2R,3R)-2,3-dihydroxy-3-methylpentanoate (2,3-dihydroxy-3-methylvalerate) into 2-oxo-3-methylpentanoate (2-oxo-3-methylvalerate) and of (2R)-2,3-dihydroxy-3-methylbutanoate (2,3-dihydroxyisovalerate) into 2-oxo-3-methylbutanoate (2-oxoisovalerate), the penultimate precursor to L-isoleucine and L-valine, respectively. In Salmonella typhi, this protein is Dihydroxy-acid dehydratase.